A 374-amino-acid chain; its full sequence is Arf-GAP with dual PH domain-containing protein 1 (374 aa).

An Arf-GAP domain is found at 7–126 (RAVLELLQRP…EFIYPEKQEP (120 aa)). The C4-type zinc finger occupies 21–44 (CADCGAPDPDWASYTLGVFICLSC). The residue at position 87 (Ser87) is a Phosphoserine; by PKC. 2 consecutive PH domains span residues 129 to 230 (AGYR…AARF) and 252 to 356 (NYLK…KAVD). Lys272 carries the N6-acetyllysine modification. Thr276 carries the post-translational modification Phosphothreonine; by PKC.

As to quaternary structure, interacts with PRKCA, PRKCI and PRKCZ. Interacts with the N-terminal region of PRKD1. Phosphorylated by PRKCA, PRKCI, PRKCZ and PRKD1 in vitro. As to expression, expressed at highest levels in brain and at lower levels in peripheral blood leukocytes.

It localises to the nucleus. Its subcellular location is the cytoplasm. GTPase-activating protein for the ADP ribosylation factor family. Binds phosphatidylinositol 3,4,5-trisphosphate (PtdInsP3) and inositol 1,3,4,5-tetrakisphosphate (InsP4). Regulates the incorporation of CD63 and CD9 into multivesicular bodies. The chain is Arf-GAP with dual PH domain-containing protein 1 (ADAP1) from Homo sapiens (Human).